The sequence spans 365 residues: tRNA/tmRNA (uracil-C(5))-methyltransferase (365 aa).

S-adenosyl-L-methionine-binding residues include Gln189, Tyr217, Asn222, Glu238, and Asp298. Cys323 (nucleophile) is an active-site residue. Residue Glu357 is the Proton acceptor of the active site.

It belongs to the class I-like SAM-binding methyltransferase superfamily. RNA M5U methyltransferase family. TrmA subfamily.

It catalyses the reaction uridine(54) in tRNA + S-adenosyl-L-methionine = 5-methyluridine(54) in tRNA + S-adenosyl-L-homocysteine + H(+). The catalysed reaction is uridine(341) in tmRNA + S-adenosyl-L-methionine = 5-methyluridine(341) in tmRNA + S-adenosyl-L-homocysteine + H(+). Dual-specificity methyltransferase that catalyzes the formation of 5-methyluridine at position 54 (m5U54) in all tRNAs, and that of position 341 (m5U341) in tmRNA (transfer-mRNA). The protein is tRNA/tmRNA (uracil-C(5))-methyltransferase of Pasteurella multocida (strain Pm70).